Here is a 171-residue protein sequence, read N- to C-terminus: Calcium channel flower homolog (171 aa).

The Cytoplasmic segment spans residues 1 to 31 (MSGSGAAGAAAGPAPPAQEEGMTWWYRWLCR). Residues 32–52 (LAGVLGAVSCAISGLFNCVTI) form a helical membrane-spanning segment. Over 53 to 56 (HPLN) the chain is Extracellular. The helical transmembrane segment at 57-77 (IAAGVWMIMNAFILLLCEAPF) threads the bilayer. Over 78–101 (CCQFVEFANTVAEKVDRLRSWQKA) the chain is Cytoplasmic. The helical transmembrane segment at 102 to 122 (VFYCGMAIVPIVMSLTLTTLL) threads the bilayer. Residues 123 to 124 (GN) are Extracellular-facing. A helical transmembrane segment spans residues 125–141 (AIAFATGVLYGLSALGK). The Cytoplasmic segment spans residues 142 to 171 (KGDAISYARIQQQRQQADEEKLAETFEGEL).

It belongs to the calcium channel flower family. In terms of assembly, interacts with adaptor protein complex 2 (AP-2). As to expression, expressed in neurons in the brain (at protein level). Expressed in neuroblastoma cell lines (at protein level). Expressed in cytotoxic T-lymphoocytes (at protein level). In terms of tissue distribution, low levels of expression in various tissues including the brain, eye, heart, liver and colon. Expression in the heart is at slightly higher levels than isoform 3. Expressed in skin cells. Very low levels of expression in the brain, liver and eye. Detected at very low levels of expression in skin cells. As to expression, expressed in various tissues, with highest levels of expression in the brain and eye. Expressed in skin cells. Low levels of expression in the liver, colon, heart and spleen. In terms of tissue distribution, barely detected in the brain and liver.

The protein localises to the cell membrane. It localises to the vesicle. Its function is as follows. Transmembrane protein which mediates synaptic endocytosis and fitness-based cell culling. In response to different stimulus strengths, controls two major modes of synaptic vesicle (SV) retrieval in hippocampal neurons; Clathrin-mediated endocytosis (CME) in response to mild stimulation and activity-dependent bulk endocytosis (ADBE) in response to strong stimulation. In cytotoxic T-lymphoocytes (CTLs) facilitates calcium-dependent endocytosis of cytotoxic granules (CGs) at the immuno synapse. Different isoforms work as fitness fingerprints in 'loser' and 'winner' cells and thereby mediate win/lose decisions as part of the cell competition process. The polypeptide is Calcium channel flower homolog (Cacfd1) (Mus musculus (Mouse)).